Consider the following 390-residue polypeptide: Protein DDI1 homolog (390 aa).

Aspartate 205 is a catalytic residue. The interval 322–344 (MHAPRHQDPATTATTASNPAAPV) is disordered. Low complexity predominate over residues 330-343 (PATTATTASNPAAP).

This sequence belongs to the DDI1 family.

It localises to the cytoplasm. Inhibited by pepstatin, diazoacetyl-DL-norleucine methyl ester (DAN) and nelfinavir. Inhibited by the proteinase inhibitors lopinavir and ritonavir. Its function is as follows. Aspartic protease. The polypeptide is Protein DDI1 homolog (Leishmania major).